Consider the following 510-residue polypeptide: GPI mannosyltransferase 3 (510 aa).

7 helical membrane-spanning segments follow: residues 17–37, 96–116, 123–143, 145–163, 179–199, 221–241, and 269–289; these read TVLVVIAAFRVANALTTKTFF, IAPKIVMALFASAGDVYTWKL, PAEAPWALFVSLLSAFNWFFL, RTFSNSAEMVLTAVALNYW, LFIGAISCVLRPTNAILWAVL, VALVFAATYYIDYLYYGEPVF, and YEALPLLTVGWLPLTLWGLWI. Residue asparagine 290 is glycosylated (N-linked (GlcNAc...) asparagine). 2 helical membrane-spanning segments follow: residues 316-336 and 342-362; these read FIYPLVPILHMAAAEAITQTP and WLVWSLALVNILVAGYFSQVH.

Belongs to the glycosyltransferase 22 family. PIGB subfamily.

Its subcellular location is the endoplasmic reticulum membrane. Its pathway is glycolipid biosynthesis; glycosylphosphatidylinositol-anchor biosynthesis. In terms of biological role, mannosyltransferase involved in glycosylphosphatidylinositol-anchor biosynthesis. Transfers the third mannose to Man2-GlcN-acyl-PI during GPI precursor assembly. This chain is GPI mannosyltransferase 3 (GPI10), found in Yarrowia lipolytica (strain CLIB 122 / E 150) (Yeast).